The sequence spans 150 residues: Monothiol glutaredoxin-5, mitochondrial (150 aa).

A mitochondrion-targeting transit peptide spans 1-29 (MFLPKFNPIRSFSPILRAKTLLRYQNRMY). Residues 35-140 (RKAIEDAIES…DLLEEAQALV (106 aa)) enclose the Glutaredoxin domain. A glutathione-binding site is contributed by lysine 52. Cysteine 60 is a binding site for [2Fe-2S] cluster. Glutathione contacts are provided by residues 92-96 (REGIK), isoleucine 104, and 117-118 (CD).

This sequence belongs to the glutaredoxin family. Monothiol subfamily. Homodimer. Interacts with SSQ1. Interacts with BOL1.

The protein resides in the mitochondrion matrix. Functionally, monothiol glutaredoxin involved in mitochondrial iron-sulfur (Fe/S) cluster transfer. Receives 2Fe/2S clusters from scaffold protein ISU1 and mediates their transfer to apoproteins, to the 4Fe/FS cluster biosynthesis machinery, or export from mitochondrion. In Saccharomyces cerevisiae (strain ATCC 204508 / S288c) (Baker's yeast), this protein is Monothiol glutaredoxin-5, mitochondrial.